The sequence spans 258 residues: Aspartate/glutamate leucyltransferase (258 aa).

It belongs to the R-transferase family. Bpt subfamily.

Its subcellular location is the cytoplasm. It carries out the reaction N-terminal L-glutamyl-[protein] + L-leucyl-tRNA(Leu) = N-terminal L-leucyl-L-glutamyl-[protein] + tRNA(Leu) + H(+). It catalyses the reaction N-terminal L-aspartyl-[protein] + L-leucyl-tRNA(Leu) = N-terminal L-leucyl-L-aspartyl-[protein] + tRNA(Leu) + H(+). Functionally, functions in the N-end rule pathway of protein degradation where it conjugates Leu from its aminoacyl-tRNA to the N-termini of proteins containing an N-terminal aspartate or glutamate. The chain is Aspartate/glutamate leucyltransferase from Rhizobium johnstonii (strain DSM 114642 / LMG 32736 / 3841) (Rhizobium leguminosarum bv. viciae).